Reading from the N-terminus, the 949-residue chain is MAM domain-containing glycosylphosphatidylinositol anchor protein 1 (949 aa).

Residues 1–18 (MEMICVLFLSLVPAYSRG) form the signal peptide. Ig-like domains are found at residues 24-125 (PAQA…IRVD) and 132-230 (PVLT…KSIT). N-linked (GlcNAc...) asparagine glycosylation is found at N42 and N90. 2 disulfide bridges follow: C60–C108 and C157–C214. N-linked (GlcNAc...) asparagine glycans are attached at residues N235, N247, N257, N292, N307, and N331. The Ig-like 3 domain maps to 240 to 323 (PALKLSVNET…VGNPAKKTVN (84 aa)). A disulfide bridge connects residues C262 and C308. 3 consecutive Ig-like domains span residues 338 to 432 (PDVI…VEVN), 440 to 531 (PTIS…ALVQ), and 537 to 625 (PPVV…FQVS). An intrachain disulfide couples C357 to C415. N-linked (GlcNAc...) asparagine glycosylation occurs at N432. Cystine bridges form between C463–C513 and C559–C609. N-linked (GlcNAc...) asparagine glycans are attached at residues N577, N649, and N820. Residues 637–737 (TPNPTLSQKQ…ARIIRYMEPI (101 aa)) form the Fibronectin type-III domain. The 168-residue stretch at 745-912 (NTCRFEDEKI…VTLKKGDCPR (168 aa)) folds into the MAM domain. S926 carries the GPI-anchor amidated serine lipid modification. Positions 927 to 949 (GVSAQHGPCLCGPLTFFLYVLLR) are cleaved as a propeptide — removed in mature form.

In terms of assembly, interacts heterophilically through its MAM domain with proteins in axon-rich regions and through its Ig-like domains with proteins in differentiating muscle. In the embryonic brachial spinal cord, selectively expressed by medial lateral motor column neurons, some populations of dorsal root ganglion neurons, and interneurons.

It localises to the cell membrane. In terms of biological role, required for radial migration of cortical neurons in the superficial layer of the neocortex. The protein is MAM domain-containing glycosylphosphatidylinositol anchor protein 1 of Gallus gallus (Chicken).